The sequence spans 156 residues: Transcription elongation factor GreA (156 aa).

A coiled-coil region spans residues 46 to 66 (AEYHSAREKQSFIEGRIKELE).

It belongs to the GreA/GreB family.

Necessary for efficient RNA polymerase transcription elongation past template-encoded arresting sites. The arresting sites in DNA have the property of trapping a certain fraction of elongating RNA polymerases that pass through, resulting in locked ternary complexes. Cleavage of the nascent transcript by cleavage factors such as GreA or GreB allows the resumption of elongation from the new 3'terminus. GreA releases sequences of 2 to 3 nucleotides. This Ruegeria pomeroyi (strain ATCC 700808 / DSM 15171 / DSS-3) (Silicibacter pomeroyi) protein is Transcription elongation factor GreA.